A 261-amino-acid chain; its full sequence is Probable membrane transporter protein ORF9 (261 aa).

Helical transmembrane passes span 8–28 (LLAF…IAGG), 29–49 (GGMI…QTLG), 78–98 (LPMA…ATIV), 100–120 (GDVL…YFGL), 133–151 (VTPF…FYDG), 152–171 (VFGP…LAGF), 189–209 (VGAF…GLLM), and 231–251 (IIKP…LADP).

Belongs to the 4-toluene sulfonate uptake permease (TSUP) (TC 2.A.102) family.

Its subcellular location is the cell membrane. The polypeptide is Probable membrane transporter protein ORF9 (Sinorhizobium sp).